The sequence spans 257 residues: MLLTLASGALFFPGLFALSIWALHRLRPGWTEDDCLTVGTRLVSSVQAVLATWAGLTVIISCKNVVSDRHWLATEYVWFLIPYMIYDFYAMYCCERCRTKSQKLTRTTIIRNFLIENRLMVTHHTVILLFLVPISQKLRGDLGDFFVGCIFTAELSTPFVSLARIMIQLKQQHTLLYKVNGILTVTTFLFCRILLFPFMYWSYGQQKGLSLLQVPFNIPLHCNMANAVLISPQLYWFSLLCKKAARLFDTAKAKKDG.

Transmembrane regions (helical) follow at residues M1–W21, L42–C62, W71–M91, L114–I134, L142–L162, G181–W201, and L220–L240. The 217-residue stretch at D33 to D249 folds into the TLC domain.

Interacts with GGT7 isoform 3 and SLC3A2.

It localises to the cell membrane. The sequence is that of TLC domain-containing protein 3A (Tlcd3a) from Mus musculus (Mouse).